The primary structure comprises 430 residues: Zinc finger CCCH domain-containing protein 48 (430 aa).

Disordered stretches follow at residues 1 to 27 and 56 to 90; these read MDLD…TTDS and GSGP…GTAN. A C3H1-type 1 zinc finger spans residues 26–52; that stretch reads DSNQKVCFHWRAGRCNRYPCPYLHREL. The C3H1-type 2 zinc-finger motif lies at 102-129; that stretch reads TKTEKLCKFWVDGNCPYGDKCRYLHCWS. WD repeat units lie at residues 142–183, 221–258, 265–304, 306–342, 345–389, and 391–429; these read GHQK…GVLN, GPVG…SCFD, GHTL…QTLT, HTSV…NLEV, THKE…ERGK, and LAKQ…TPIL.

The polypeptide is Zinc finger CCCH domain-containing protein 48 (ZFWD1) (Arabidopsis thaliana (Mouse-ear cress)).